The primary structure comprises 881 residues: Cell wall protein PRY3 (881 aa).

Residues M1–A18 form the signal peptide. In terms of domain architecture, SCP spans L30–Y144. N101 carries an N-linked (GlcNAc...) asparagine glycan. The interval V262–T313 is disordered. N-linked (GlcNAc...) asparagine glycosylation is present at N360. Disordered stretches follow at residues A381–H400 and V453–A494. Over residues Q386–H400 the composition is skewed to polar residues. N-linked (GlcNAc...) asparagine glycans are attached at residues N488, N535, N547, and N569. The tract at residues I579–L611 is disordered. Residues P585–D594 show a composition bias toward polar residues. Residues T599 to L611 show a composition bias toward low complexity. N-linked (GlcNAc...) asparagine glycosylation occurs at N625. Disordered regions lie at residues L758 to T788 and P800 to P830. 2 stretches are compositionally biased toward low complexity: residues S776 to T788 and R808 to S820. Polar residues predominate over residues Q821 to P830. G853 carries the GPI-anchor amidated glycine lipid modification. The propeptide at A854–F881 is removed in mature form.

It belongs to the CRISP family. The GPI-anchor is attached to the protein in the endoplasmic reticulum and serves to target the protein to the cell surface. There, the glucosamine-inositol phospholipid moiety is cleaved off and the GPI-modified mannoprotein is covalently attached via its lipidless GPI glycan remnant to the 1,6-beta-glucan of the outer cell wall layer.

It localises to the secreted. The protein resides in the cell wall. Its subcellular location is the membrane. In terms of biological role, the full-length isoform (isoform Long) is a daughter cell-specific cell wall protein required for efficient export of lipids such as acetylated sterols. Acts in detoxification of hydrophobic compounds. Involved in tolerance to organic solvents such as dimethyl sulfoxide (DMSO). Also plays a role as an inhibitor of mating. STE12 is utilized as a repressor of full-length PRY3 transcription, ensuring efficient mating. Functionally, there is no evidence that production of the short PRY3 transcript (isoform Short) is anything more than an adventitious by-product of the mechanism responsible for the repression of the full-length transcript. Moreover, no disadvantage is detectable for cells unable to make the short transcript. This Saccharomyces cerevisiae (strain ATCC 204508 / S288c) (Baker's yeast) protein is Cell wall protein PRY3 (PRY3).